A 103-amino-acid chain; its full sequence is Putative glutaredoxin-C12 (103 aa).

Residues 1 to 102 (MERVRDLASE…QMLKASNAIW (102 aa)) form the Glutaredoxin domain. Cys21 and Cys24 are disulfide-bonded.

The protein belongs to the glutaredoxin family. CC-type subfamily.

Its subcellular location is the cytoplasm. Its function is as follows. Has a glutathione-disulfide oxidoreductase activity in the presence of NADPH and glutathione reductase. Reduces low molecular weight disulfides and proteins. This chain is Putative glutaredoxin-C12 (GRXC12), found in Arabidopsis thaliana (Mouse-ear cress).